Here is a 115-residue protein sequence, read N- to C-terminus: Large ribosomal subunit protein bL19 (115 aa).

Belongs to the bacterial ribosomal protein bL19 family.

This protein is located at the 30S-50S ribosomal subunit interface and may play a role in the structure and function of the aminoacyl-tRNA binding site. This Fervidobacterium nodosum (strain ATCC 35602 / DSM 5306 / Rt17-B1) protein is Large ribosomal subunit protein bL19.